A 245-amino-acid chain; its full sequence is tRNA (guanine-N(1)-)-methyltransferase (245 aa).

S-adenosyl-L-methionine-binding positions include Gly-111 and 131-136 (MGDYVL).

Belongs to the RNA methyltransferase TrmD family. In terms of assembly, homodimer.

Its subcellular location is the cytoplasm. The catalysed reaction is guanosine(37) in tRNA + S-adenosyl-L-methionine = N(1)-methylguanosine(37) in tRNA + S-adenosyl-L-homocysteine + H(+). Functionally, specifically methylates guanosine-37 in various tRNAs. In Staphylococcus aureus (strain MRSA252), this protein is tRNA (guanine-N(1)-)-methyltransferase.